Here is a 557-residue protein sequence, read N- to C-terminus: T-complex protein 1 subunit theta-like 2 (557 aa).

Disordered regions lie at residues 1-33 (MDST…EPHL) and 531-557 (EIWN…GLNN).

This sequence belongs to the TCP-1 chaperonin family.

The protein resides in the cytoplasm. In terms of biological role, possible molecular chaperone; assists the folding of proteins upon ATP hydrolysis. The sequence is that of T-complex protein 1 subunit theta-like 2 (CCT8L2) from Homo sapiens (Human).